A 137-amino-acid chain; its full sequence is Holo-[acyl-carrier-protein] synthase (137 aa).

The Mg(2+) site is built by D7 and E58.

The protein belongs to the P-Pant transferase superfamily. AcpS family. Mg(2+) is required as a cofactor.

Its subcellular location is the cytoplasm. The enzyme catalyses apo-[ACP] + CoA = holo-[ACP] + adenosine 3',5'-bisphosphate + H(+). In terms of biological role, transfers the 4'-phosphopantetheine moiety from coenzyme A to a Ser of acyl-carrier-protein. The polypeptide is Holo-[acyl-carrier-protein] synthase (Chloroflexus aurantiacus (strain ATCC 29366 / DSM 635 / J-10-fl)).